The following is a 1088-amino-acid chain: RNA-directed RNA polymerase (1088 aa).

Positions 501 to 687 constitute a RdRp catalytic domain; that stretch reads LSYGDVTRFL…AKRYIAGGKI (187 aa).

Belongs to the reoviridae RNA-directed RNA polymerase family. Interacts with VP3 (Potential). Interacts with VP2; this interaction activates VP1. Interacts with NSP5; this interaction is probably necessary for the formation of functional virus factories. Interacts with NSP2; this interaction is weak. Mg(2+) serves as cofactor.

The protein resides in the virion. It carries out the reaction RNA(n) + a ribonucleoside 5'-triphosphate = RNA(n+1) + diphosphate. In terms of biological role, RNA-directed RNA polymerase that is involved in both transcription and genome replication. Together with VP3 capping enzyme, forms an enzyme complex positioned near the channels situated at each of the five-fold vertices of the core. Following infection, the outermost layer of the virus is lost, leaving a double-layered particle (DLP) made up of the core and VP6 shell. VP1 then catalyzes the transcription of fully conservative plus-strand genomic RNAs that are extruded through the DLP's channels into the cytoplasm where they function as mRNAs for translation of viral proteins. One copy of each of the viral (+)RNAs is also recruited during core assembly, together with newly synthesized polymerase complexes and VP2. The polymerase of these novo-formed particles catalyzes the synthesis of complementary minus-strands leading to dsRNA formation. To do so, the polymerase specifically recognizes and binds 4 bases 5'-UGUG-3' in the conserved 3'-sequence of plus-strand RNA templates. VP2 presumably activates the autoinhibited VP1-RNA complex to coordinate packaging and genome replication. Once dsRNA synthesis is complete, the polymerase switches to the transcriptional mode, thus providing secondary transcription. In Rotavirus A (strain RVA/Cow/United States/NCDV-Lincoln/1969/G6P6[1]) (RV-A), this protein is RNA-directed RNA polymerase.